A 376-amino-acid chain; its full sequence is N-acetyldiaminopimelate deacetylase (376 aa).

Aspartate 69 is a catalytic residue. Glutamate 128 functions as the Proton acceptor in the catalytic mechanism.

Belongs to the peptidase M20A family. N-acetyldiaminopimelate deacetylase subfamily.

The catalysed reaction is N-acetyl-(2S,6S)-2,6-diaminopimelate + H2O = (2S,6S)-2,6-diaminopimelate + acetate. It functions in the pathway amino-acid biosynthesis; L-lysine biosynthesis via DAP pathway; LL-2,6-diaminopimelate from (S)-tetrahydrodipicolinate (acetylase route): step 3/3. Its function is as follows. Catalyzes the conversion of N-acetyl-diaminopimelate to diaminopimelate and acetate. The protein is N-acetyldiaminopimelate deacetylase of Bacillus thuringiensis subsp. konkukian (strain 97-27).